We begin with the raw amino-acid sequence, 142 residues long: Organic hydroperoxide resistance protein-like 2 (142 aa).

This sequence belongs to the OsmC/Ohr family.

The protein is Organic hydroperoxide resistance protein-like 2 of Staphylococcus epidermidis (strain ATCC 12228 / FDA PCI 1200).